A 196-amino-acid chain; its full sequence is uncharacterized protein (196 aa).

This is an uncharacterized protein from Pasteurella multocida (strain Pm70).